A 295-amino-acid chain; its full sequence is Large ribosomal subunit protein uL18 (295 aa).

Residues 251-261 (PTPKKKTDFAG) are compositionally biased toward basic and acidic residues. The tract at residues 251-295 (PTPKKKTDFAGKTKRWNRKKMTFSQRRDRVKQKKASFLRAKQQEG) is disordered. The span at 262-271 (KTKRWNRKKM) shows a compositional bias: basic residues.

It belongs to the universal ribosomal protein uL18 family. Component of the large ribosomal subunit (LSU).

Its subcellular location is the cytoplasm. The protein resides in the nucleus. In terms of biological role, component of the ribosome, a large ribonucleoprotein complex responsible for the synthesis of proteins in the cell. The small ribosomal subunit (SSU) binds messenger RNAs (mRNAs) and translates the encoded message by selecting cognate aminoacyl-transfer RNA (tRNA) molecules. The large subunit (LSU) contains the ribosomal catalytic site termed the peptidyl transferase center (PTC), which catalyzes the formation of peptide bonds, thereby polymerizing the amino acids delivered by tRNAs into a polypeptide chain. The nascent polypeptides leave the ribosome through a tunnel in the LSU and interact with protein factors that function in enzymatic processing, targeting, and the membrane insertion of nascent chains at the exit of the ribosomal tunnel. The protein is Large ribosomal subunit protein uL18 (RPL5) of Styela clava (Sea squirt).